We begin with the raw amino-acid sequence, 282 residues long: MPELPEVETVRKGLEKLLNDFYIERIEVLKERSIASNGGSKSFIDNVKNSYLGNWERRGKYLIGSLLTKEKFSKGFLVVHLRMTGQFKLLEKEVLACKHTRVRFFEERGRELRFIDIRNFGQMWHVPSSRSVPEIVSGIKRLGPEPFSDDFNSHYLEEYLKKKTRSIKSALLDQRTVAGVGNIYADETLFDAGINPKTESRNLKSNELKRLCNSLIKILNISIGEGGTTFSDFRDLEGGNGNYGGQALVYRRSGKNCKKCGEKILREKICGRSTHWCPNCQK.

Pro-2 functions as the Schiff-base intermediate with DNA in the catalytic mechanism. The Proton donor role is filled by Glu-3. Residue Lys-60 is the Proton donor; for beta-elimination activity of the active site. DNA contacts are provided by His-99, Arg-118, and Lys-163. The segment at 248 to 282 (LVYRRSGKNCKKCGEKILREKICGRSTHWCPNCQK) adopts an FPG-type zinc-finger fold. The Proton donor; for delta-elimination activity role is filled by Arg-272.

It belongs to the FPG family. As to quaternary structure, monomer. Requires Zn(2+) as cofactor.

It carries out the reaction Hydrolysis of DNA containing ring-opened 7-methylguanine residues, releasing 2,6-diamino-4-hydroxy-5-(N-methyl)formamidopyrimidine.. The catalysed reaction is 2'-deoxyribonucleotide-(2'-deoxyribose 5'-phosphate)-2'-deoxyribonucleotide-DNA = a 3'-end 2'-deoxyribonucleotide-(2,3-dehydro-2,3-deoxyribose 5'-phosphate)-DNA + a 5'-end 5'-phospho-2'-deoxyribonucleoside-DNA + H(+). Involved in base excision repair of DNA damaged by oxidation or by mutagenic agents. Acts as a DNA glycosylase that recognizes and removes damaged bases. Has a preference for oxidized purines, such as 7,8-dihydro-8-oxoguanine (8-oxoG). Has AP (apurinic/apyrimidinic) lyase activity and introduces nicks in the DNA strand. Cleaves the DNA backbone by beta-delta elimination to generate a single-strand break at the site of the removed base with both 3'- and 5'-phosphates. This Prochlorococcus marinus (strain NATL1A) protein is Formamidopyrimidine-DNA glycosylase.